A 109-amino-acid polypeptide reads, in one-letter code: Staphostatin B (109 aa).

The binds to staphopain B stretch occupies residues 97–101 (IGTSR).

It belongs to the protease inhibitor I57 (SspC) family. In terms of assembly, forms a stable non-covalent complex with prematurely activated/folded SspB.

It localises to the cytoplasm. In terms of biological role, specifically inhibits the cysteine protease staphopain B (SspB) by blocking the active site of the enzyme. Probably required to protect cytoplasmic proteins from being degraded by prematurely activated/folded prostaphopain B. Also involved in growth capacity, viability and bacterial morphology. The sequence is that of Staphostatin B (sspC) from Staphylococcus aureus (strain MRSA252).